The primary structure comprises 57 residues: DNA gyrase inhibitor YacG (57 aa).

The Zn(2+) site is built by Cys10, Cys13, Cys25, and Cys29.

This sequence belongs to the DNA gyrase inhibitor YacG family. As to quaternary structure, interacts with GyrB. Zn(2+) serves as cofactor.

Inhibits all the catalytic activities of DNA gyrase by preventing its interaction with DNA. Acts by binding directly to the C-terminal domain of GyrB, which probably disrupts DNA binding by the gyrase. The sequence is that of DNA gyrase inhibitor YacG from Brucella abortus (strain 2308).